Reading from the N-terminus, the 120-residue chain is Large ribosomal subunit protein bL19 (120 aa).

The protein belongs to the bacterial ribosomal protein bL19 family.

Its function is as follows. This protein is located at the 30S-50S ribosomal subunit interface and may play a role in the structure and function of the aminoacyl-tRNA binding site. In Chlorobium limicola (strain DSM 245 / NBRC 103803 / 6330), this protein is Large ribosomal subunit protein bL19.